The chain runs to 328 residues: Arabinose 5-phosphate isomerase KdsD (328 aa).

Residues 42-184 (CEKMFWCKGK…AVALLKARGF (143 aa)) form the SIS domain. Substrate-binding positions include 75-76 (GT), His-82, His-88, 114-123 (ALIPVLKRLH), 148-150 (KVA), Thr-222, and Asp-275. His-82 lines the Zn(2+) pocket. Residues 210 to 268 (MHTGDEIPHVKKTASLRDALLEVTRKNLGMTVICDDNMMIEGIFTDGDLRRVFDMGVDV) form the CBS 1 domain. In terms of domain architecture, CBS 2 spans 277 to 328 (MTPGGIRVRPGILAVEALNLMQSRHITSVMVADGDHLLGVLHMHDLLRAGVV).

Belongs to the SIS family. GutQ/KpsF subfamily. Homotetramer.

It catalyses the reaction D-arabinose 5-phosphate = D-ribulose 5-phosphate. Its pathway is carbohydrate biosynthesis; 3-deoxy-D-manno-octulosonate biosynthesis; 3-deoxy-D-manno-octulosonate from D-ribulose 5-phosphate: step 1/3. The protein operates within bacterial outer membrane biogenesis; lipopolysaccharide biosynthesis. Its activity is regulated as follows. Completely inhibited by 10 uM of nickel, copper, cadmium and mercury ions. Inhibited by zinc with an IC(50) of 1-3 uM. Metal ion inhibition may be a mechanism to control activity in vivo. Involved in the biosynthesis of 3-deoxy-D-manno-octulosonate (KDO), a unique 8-carbon sugar component of lipopolysaccharides (LPSs). KdsD is not essential in the KDO biosynthesis and can be substituted by GutQ. Catalyzes the reversible aldol-ketol isomerization between D-ribulose 5-phosphate (Ru5P) and D-arabinose 5-phosphate (A5P). The sequence is that of Arabinose 5-phosphate isomerase KdsD (kdsD) from Escherichia coli (strain K12).